Reading from the N-terminus, the 180-residue chain is Major urinary protein 2 (180 aa).

The signal sequence occupies residues M1–A18. C82 and C175 are disulfide-bonded.

Belongs to the calycin superfamily. Lipocalin family. In terms of tissue distribution, abundant in the urine of adult male mice but absent from that of females.

It is found in the secreted. In terms of biological role, binds pheromones that are released from drying urine of males. These pheromones affect the sexual behavior of females. The polypeptide is Major urinary protein 2 (Mup2) (Mus musculus (Mouse)).